The sequence spans 1214 residues: Myosin-1 (1214 aa).

The disordered stretch occupies residues 1–21 (MAIIKRGARNKTAQEPAKRSA). A Myosin motor domain is found at 36 to 715 (VGVSDLTLLS…TLFALEHMRD (680 aa)). 129–136 (GESGAGKT) contributes to the ATP binding site. Phosphoserine is present on Ser357. An actin-binding region spans residues 404-486 (SIGILDIYGF…PGIFAAMNDS (83 aa)). IQ domains follow at residues 719–739 (YNMA…RIDS) and 740–765 (ATRI…EGSK). One can recognise a TH1 domain in the interval 771–961 (KERRTMSLLG…TILVRRGHPA (191 aa)). Disordered stretches follow at residues 926-1090 (KPGK…SELP), 1129-1177 (HQGG…AAAQ), and 1193-1214 (NKMR…DDDW). A compositionally biased stretch (basic residues) spans 965–980 (QKKKPKKGKGHSKHHS). Composition is skewed to low complexity over residues 981–1000 (TSTS…APVS) and 1037–1057 (AAQP…QKKV). The segment covering 1058-1067 (APPPPPPPPM) has biased composition (pro residues). One can recognise an SH3 domain in the interval 1069–1131 (SSEPKYEAAY…PTNYVVKHQG (63 aa)). A compositionally biased stretch (low complexity) spans 1157–1177 (VSSSQSETATTATPASVAAAQ). Residues 1200–1214 (DGEDNGNDDDDDDDW) are compositionally biased toward acidic residues.

This sequence belongs to the TRAFAC class myosin-kinesin ATPase superfamily. Myosin family. Post-translationally, phosphorylation of the TEDS site (Ser-357) is required for the polarization of the actin cytoskeleton. Phosphorylation probably activates the myosin-I ATPase activity.

The protein resides in the cytoplasm. The protein localises to the cytoskeleton. Its subcellular location is the actin patch. Type-I myosin implicated in the organization of the actin cytoskeleton. Required for proper actin cytoskeleton polarization. At the cell cortex, assembles in patch-like structures together with proteins from the actin-polymerizing machinery and promotes actin assembly. Functions as actin nucleation-promoting factor (NPF) for the Arp2/3 complex. This chain is Myosin-1 (MYO1), found in Vanderwaltozyma polyspora (strain ATCC 22028 / DSM 70294 / BCRC 21397 / CBS 2163 / NBRC 10782 / NRRL Y-8283 / UCD 57-17) (Kluyveromyces polysporus).